We begin with the raw amino-acid sequence, 292 residues long: Ribosomal protein L11 methyltransferase (292 aa).

Residues T145, G166, D188, and N229 each coordinate S-adenosyl-L-methionine.

The protein belongs to the methyltransferase superfamily. PrmA family.

The protein resides in the cytoplasm. The catalysed reaction is L-lysyl-[protein] + 3 S-adenosyl-L-methionine = N(6),N(6),N(6)-trimethyl-L-lysyl-[protein] + 3 S-adenosyl-L-homocysteine + 3 H(+). Functionally, methylates ribosomal protein L11. In Pseudoalteromonas atlantica (strain T6c / ATCC BAA-1087), this protein is Ribosomal protein L11 methyltransferase.